The following is a 258-amino-acid chain: Imidazole glycerol phosphate synthase subunit HisF (258 aa).

Active-site residues include D11 and D130.

This sequence belongs to the HisA/HisF family. As to quaternary structure, heterodimer of HisH and HisF.

The protein localises to the cytoplasm. It carries out the reaction 5-[(5-phospho-1-deoxy-D-ribulos-1-ylimino)methylamino]-1-(5-phospho-beta-D-ribosyl)imidazole-4-carboxamide + L-glutamine = D-erythro-1-(imidazol-4-yl)glycerol 3-phosphate + 5-amino-1-(5-phospho-beta-D-ribosyl)imidazole-4-carboxamide + L-glutamate + H(+). It functions in the pathway amino-acid biosynthesis; L-histidine biosynthesis; L-histidine from 5-phospho-alpha-D-ribose 1-diphosphate: step 5/9. Functionally, IGPS catalyzes the conversion of PRFAR and glutamine to IGP, AICAR and glutamate. The HisF subunit catalyzes the cyclization activity that produces IGP and AICAR from PRFAR using the ammonia provided by the HisH subunit. This chain is Imidazole glycerol phosphate synthase subunit HisF, found in Magnetococcus marinus (strain ATCC BAA-1437 / JCM 17883 / MC-1).